Reading from the N-terminus, the 400-residue chain is Enoyl-[acyl-carrier-protein] reductase [NADH] (400 aa).

Residues 48 to 53 (GSSSGY), 74 to 75 (FE), 111 to 112 (DA), and 139 to 140 (LA) each bind NAD(+). Residue tyrosine 225 coordinates substrate. Tyrosine 235 functions as the Proton donor in the catalytic mechanism. Residues lysine 244 and 273–275 (VVT) each bind NAD(+).

The protein belongs to the TER reductase family. As to quaternary structure, monomer.

The enzyme catalyses a 2,3-saturated acyl-[ACP] + NAD(+) = a (2E)-enoyl-[ACP] + NADH + H(+). The protein operates within lipid metabolism; fatty acid biosynthesis. Functionally, involved in the final reduction of the elongation cycle of fatty acid synthesis (FAS II). Catalyzes the reduction of a carbon-carbon double bond in an enoyl moiety that is covalently linked to an acyl carrier protein (ACP). This chain is Enoyl-[acyl-carrier-protein] reductase [NADH], found in Shewanella baltica (strain OS223).